The sequence spans 237 residues: Proteasome subunit beta (237 aa).

The tract at residues 1 to 27 is disordered; the sequence is MSKFPDLPGMKNLDANPYEPELASFDD. A propeptide spans 1 to 42 (removed in mature form; by autocatalysis); sequence MSKFPDLPGMKNLDANPYEPELASFDDMDADAGDGDAVAKTG. The Nucleophile role is filled by Thr-43.

Belongs to the peptidase T1B family. In terms of assembly, the 20S proteasome core is composed of 14 alpha and 14 beta subunits that assemble into four stacked heptameric rings, resulting in a barrel-shaped structure. The two inner rings, each composed of seven catalytic beta subunits, are sandwiched by two outer rings, each composed of seven alpha subunits. The catalytic chamber with the active sites is on the inside of the barrel. Has a gated structure, the ends of the cylinder being occluded by the N-termini of the alpha-subunits. Is capped at one or both ends by the proteasome regulatory ATPase, PAN.

The protein resides in the cytoplasm. The enzyme catalyses Cleavage of peptide bonds with very broad specificity.. Its activity is regulated as follows. The formation of the proteasomal ATPase PAN-20S proteasome complex, via the docking of the C-termini of PAN into the intersubunit pockets in the alpha-rings, triggers opening of the gate for substrate entry. Interconversion between the open-gate and close-gate conformations leads to a dynamic regulation of the 20S proteasome proteolysis activity. Its function is as follows. Component of the proteasome core, a large protease complex with broad specificity involved in protein degradation. This chain is Proteasome subunit beta, found in Halomicrobium mukohataei (strain ATCC 700874 / DSM 12286 / JCM 9738 / NCIMB 13541) (Haloarcula mukohataei).